Consider the following 281-residue polypeptide: Merozoite surface protein 2 (281 aa).

Residues 1-20 (MKVIKTLSIINFFIFVTFNI) form the signal peptide. N-linked (GlcNAc...) asparagine glycans are attached at residues Asn-22 and Asn-36. Residues 42–242 (SMEESNPPTG…DSQKECTDGN (201 aa)) are disordered. The polymorphic region stretch occupies residues 44–207 (EESNPPTGAS…EQTESPELQS (164 aa)). A run of 3 repeats spans residues 51 to 58 (GASGRAGA), 59 to 66 (GASGRAGA), and 67 to 74 (GASGRAGA). The 3 X 8 AA tandem repeats of G-A-S-G-R-A-G-A stretch occupies residues 51–74 (GASGRAGAGASGRAGAGASGRAGA). The segment covering 54-76 (GRAGAGASGRAGAGASGRAGAGA) has biased composition (gly residues). The segment covering 77–133 (GAVASAGSGDGAVASAGNGANPGADAKRSTSTPATTTTTTTTNDAEASTSTSSENPN) has biased composition (low complexity). Composition is skewed to polar residues over residues 150-174 (NKANTETQNNSNVQQDSQTKSNVPP) and 181-209 (KSPTAQPEQAENSAPTAEQTESPELQSAP). Residue Asn-158 is glycosylated (N-linked (GlcNAc...) asparagine). Asn-230 carries an N-linked (GlcNAc...) asparagine glycan. Cys-238 and Cys-246 form a disulfide bridge. Residues Asn-254 and Asn-255 are each glycosylated (N-linked (GlcNAc...) asparagine). Residue Asn-255 is the site of GPI-anchor amidated asparagine attachment. Residues 256–281 (SSNIASINKFVVLISATLVLSFAIFI) constitute a propeptide, removed in mature form.

The protein localises to the cell membrane. In terms of biological role, may play a role in the merozoite attachment to the erythrocyte. The polypeptide is Merozoite surface protein 2 (Plasmodium falciparum (isolate thtn / Thailand)).